Here is a 1179-residue protein sequence, read N- to C-terminus: Serine/threonine-protein kinase pakG (1179 aa).

Positions 12-53 (SKTNEDIELIKQKLKEDRELLEKERAQFEEERKIIFESLNKV) form a coiled coil. The region spanning 111 to 124 (IGTPFNVQHKVHVD) is the CRIB domain. The region spanning 139–390 (FLIDCILGTG…AIELLTHPFL (252 aa)) is the Protein kinase domain. ATP-binding positions include 145 to 153 (LGTGSYGTV) and K168. Residue D257 is the Proton acceptor of the active site. Disordered regions lie at residues 414–469 (KKKK…SSLD), 589–631 (IGNS…NNNN), 705–1086 (SSSS…PITL), and 1121–1179 (TEIN…SPKK). Residues 621-668 (NNNNNNNNNNNEFLINQIKKELILDFNENMKQYINQQLTNLKEEMLKE) adopt a coiled-coil conformation. 2 stretches are compositionally biased toward low complexity: residues 705 to 723 (SSSS…SNSS) and 743 to 761 (LPPS…TSSP). A compositionally biased stretch (pro residues) spans 762–776 (SPSPSPSPSPSPSSP). Composition is skewed to low complexity over residues 777–788 (LPSSSTSTVNTP) and 812–833 (NNNN…NNNN). Residues 834 to 857 (VIQSPKLNNRPLSPTTPTKQFNNR) are compositionally biased toward polar residues. The span at 864–891 (FNNRPPSPSKFNNRPPSPSNRPLSPKNS) shows a compositional bias: low complexity. The segment covering 892-946 (YNSLEKSNNGSISNNRPLSPKNSLEKSTTQNNTSSEDISTTTVTVTSEQGGTPIT) has biased composition (polar residues). The span at 954–963 (RPKPSPPPIP) shows a compositional bias: pro residues. Composition is skewed to low complexity over residues 964-997 (MNKS…TIAA), 1024-1046 (TTIT…SPNS), and 1053-1077 (ITTS…SSSN). Over residues 1121-1135 (TEINLPSSSPSTPQK) the composition is skewed to polar residues. Residues 1137–1158 (NTPSSIPTTPTTPTTNGGSVSS) are compositionally biased toward low complexity.

This sequence belongs to the protein kinase superfamily. STE Ser/Thr protein kinase family. STE20 subfamily. Mg(2+) serves as cofactor.

It catalyses the reaction L-seryl-[protein] + ATP = O-phospho-L-seryl-[protein] + ADP + H(+). The catalysed reaction is L-threonyl-[protein] + ATP = O-phospho-L-threonyl-[protein] + ADP + H(+). This chain is Serine/threonine-protein kinase pakG, found in Dictyostelium discoideum (Social amoeba).